Consider the following 281-residue polypeptide: Energy-coupling factor transporter ATP-binding protein EcfA1 (281 aa).

An ABC transporter domain is found at isoleucine 7–aspartate 242. ATP is bound at residue glycine 42–serine 49. Residue glutamate 168 is the Proton acceptor of the active site.

The protein belongs to the ABC transporter superfamily. Energy-coupling factor EcfA family. Forms a stable energy-coupling factor (ECF) transporter complex composed of 2 membrane-embedded substrate-binding proteins (S component), 2 ATP-binding proteins (A component) and 2 transmembrane proteins (T component).

The protein resides in the cell membrane. ATP-binding (A) component of a common energy-coupling factor (ECF) ABC-transporter complex. Unlike classic ABC transporters this ECF transporter provides the energy necessary to transport a number of different substrates. The protein is Energy-coupling factor transporter ATP-binding protein EcfA1 of Bacillus subtilis (strain 168).